The following is a 194-amino-acid chain: PRELI domain containing protein 3B (194 aa).

In terms of domain architecture, PRELI/MSF1 spans 1-172; sequence MKIWTSEHVF…VIHKLNAEIE (172 aa). Phosphoserine occurs at positions 46 and 51.

It belongs to the slowmo family.

This Sus scrofa (Pig) protein is PRELI domain containing protein 3B (PRELID3B).